Here is a 197-residue protein sequence, read N- to C-terminus: Secreted RxLR effector protein 48 (197 aa).

The N-terminal stretch at 1 to 27 is a signal peptide; sequence MCCVSWNWVLACTFLLIFLSWWNCCND. A RxLR-dEER motif is present at residues 58-79; sequence RLLRVNLAANAEVLTHEIEEEK.

It belongs to the RxLR effector family.

The protein localises to the secreted. Its subcellular location is the host nucleus. It localises to the host cytoplasm. Functionally, secreted effector that completely suppresses the host cell death induced by cell death-inducing proteins. The protein is Secreted RxLR effector protein 48 of Plasmopara viticola (Downy mildew of grapevine).